The sequence spans 811 residues: Transmembrane protease serine 6 (811 aa).

Over 1–55 (MLLLFHSKRMPVAEAPQVAGGQGDGGDGEEAEPEGMFKACEDSKRKARGYLRLVP) the chain is Cytoplasmic. Residues 56-76 (LFVLLALLVLASAGVLLWYFL) form a helical; Signal-anchor for type II membrane protein membrane-spanning segment. Topologically, residues 77–811 (GYKAEVMVSQ…VISWIQQVVT (735 aa)) are extracellular. The region spanning 84-209 (VSQVYSGSLR…EGLVILEASV (126 aa)) is the SEA domain. N-linked (GlcNAc...) asparagine glycans are attached at residues Asn-136, Asn-184, Asn-216, Asn-338, Asn-433, and Asn-453. 2 CUB domains span residues 213–336 (AALN…QACE) and 335–452 (CEVN…YGLY). Cys-335 and Cys-366 form a disulfide bridge. LDL-receptor class A domains are found at residues 457–489 (PCPG…ERNC), 490–526 (VCRA…EQCQ), and 530–567 (PCGT…EHCD). Cystine bridges form between Cys-458–Cys-470, Cys-464–Cys-480, Cys-474–Cys-489, Cys-491–Cys-503, Cys-497–Cys-516, Cys-510–Cys-525, Cys-531–Cys-543, Cys-538–Cys-557, Cys-551–Cys-566, and Cys-602–Cys-618. The N-linked (GlcNAc...) asparagine glycan is linked to Asn-518. One can recognise a Peptidase S1 domain in the interval 577-811 (IVGGAVSSEG…VISWIQQVVT (235 aa)). Residues His-617 and Asp-668 each act as charge relay system in the active site. 3 disulfides stabilise this stretch: Cys-702–Cys-768, Cys-733–Cys-747, and Cys-758–Cys-787. The active-site Charge relay system is Ser-762.

The protein belongs to the peptidase S1 family. In terms of assembly, interacts with HJV. In terms of processing, the single-chain zymogen undergoes autoproteolytic processing. This results in TMPRSS6 shedding from the cell surface and conversion into an activated two-chains form which is released extracellularly. The process involves a trans-activation mechanism that requires TMPRSS6 oligomerization.

It localises to the cell membrane. Membrane-bound serine protease. Through the cleavage of cell surface hemojuvelin (HJV), a regulator of the expression of the iron absorption-regulating hormone hepicidin/HAMP, plays a role in iron homeostasis. This chain is Transmembrane protease serine 6 (TMPRSS6), found in Homo sapiens (Human).